A 175-amino-acid chain; its full sequence is Protein MAL2 (175 aa).

Topologically, residues 1-33 are cytoplasmic; it reads MSAGGAVPPPPNPAVSFPAPRVTLPAGPDILRT. In terms of domain architecture, MARVEL spans 30-174; sequence ILRTYSGAFV…SLGLALRRWR (145 aa). The chain crosses the membrane as a helical span at residues 34–54; that stretch reads YSGAFVCLEIVLGGLVWILVA. At 55–65 the chain is on the lumenal side; it reads SSNVPLPLLQG. The chain crosses the membrane as a helical span at residues 66 to 86; the sequence is WVMFVSVTAFFFSLLFLGLFL. Over 87–101 the chain is Cytoplasmic; sequence SGMVTQIDANWNFLD. Residues 102-122 traverse the membrane as a helical segment; it reads FVYHFIVFVFYFGAFLLEAAA. Residues 123–148 are Lumenal-facing; sequence TSLHDLQCNTTMTVKPLLNDNQYNIN. Residue N131 is glycosylated (N-linked (GlcNAc...) asparagine). A helical membrane pass occupies residues 149-169; it reads VAATVFAFMTTACYGCSLGLA. Topologically, residues 170 to 175 are cytoplasmic; it reads LRRWRP.

The protein belongs to the MAL family. In terms of assembly, interacts with TPD52L2.

The protein resides in the cell membrane. The protein localises to the apical cell membrane. Member of the machinery of polarized transport. Required for the indirect transcytotic route at the step of the egress of the transcytosing cargo from perinuclear endosomes in order for it to travel to the apical surface via a raft-dependent pathway. This chain is Protein MAL2 (Mal2), found in Mus musculus (Mouse).